The sequence spans 1288 residues: MEIQQTHRKINRPLVSLVLAGALISAIPQESHAAFFTTVIIPAIVGGIATGTAVGTVSGLLSWGLKQAEEANKTPDKPDKVWRIQAGKGFNEFPNKEYDLYKSLLSSKIDGGWDWGNAARHYWVKGGQWNKLEVDMKDAVGTYKLSGLRNFTGGDLDVNMQKATLRLGQFNGNSFTSYKDSADRTTRVNFNAKNISIDNFVEINNRVGSGAGRKASSTVLTLQASEGITSSKNAEISLYDGATLNLASNSVKLNGNVWMGRLQYVGAYLAPSYSTINTSKVQGEVDFNHLTVGDQNAAQAGIIASNKTHIGTLDLWQSAGLNIIAPPEGGYKDKPNSTTSQSGTKNDKKEISQNNNSNTEVINPPNNTQKTETEPTQVIDGPFAGGKDTVVNIFHLNTKADGTIKVGGFKASLTTNAAHLNIGKGGVNLSNQASGRTLLVENLTGNITVDGPLRVNNQVGGYALAGSSANFEFKAGVDTKNGTATFNNDISLGRFVNLKVDAHTANFKGIDTGNGGFNTLDFSGVTDKVNINKLITASTNVAVKNFNINELIVKTNGISVGEYTHFSEDIGSQSRINTVRLETGTRSIFSGGVKFKSGEKLVINDFYYSPWNYFDARNVKNVEITRKFASSTPENPWGTSKLMFNNLTLGQNAVMDYSQFSNLTIQGDFINNQGTINYLVRGGKVATLNVGNAAAMMFNNDIDSATGFYKPLIKINSAQDLIKNTEHVLLKAKIIGYGNVSTGTNGISNVNLEEQFKERLALYNNNNRMDTCVVRNTDDIKACGMAIGNQSMVNNPDNYKYLIGKAWRNIGISKTANGSKISVYYLGNSTPTENGGNTTNLPTNTTNNAHSANYALVKNAPFAHSATPNLVAINQHDFGTIESVFELANRSKDIDTLYTHSGAQGRDLLQTLLIDSHDAGYARQMIDNTSTGEITKQLNAATDALNNVASLEHKQSGLQTLSLSNAMILNSRLVNLSRKHTNHINSFAQRLQALKGQEFASLESAAEVLYQFAPKYEKPTNVWANAIGGASLNSGSNASLYGTSAGVDAFLNGNVEAIVGGFGSYGYSSFSNQANSLNSGANNANFGVYSRFFANQHEFDFEAQGALGSDQSSLNFKSTLLQDLNQSYNYLAYSATARASYGYDFAFFRNALVLKPSVGVSYNHLGSTNFKSNSQSQVALKNGASSQHLFNANANVEARYYYGDTSYFYLHAGVLQEFAHFGSNDVASLNTFKINAARSPLSTYARAMMGGELQLAKEVFLNLGVVYLHNLISNASHFASNLGMRYSF.

The first 33 residues, 1 to 33 (MEIQQTHRKINRPLVSLVLAGALISAIPQESHA), serve as a signal peptide directing secretion. Positions 326–377 (PPEGGYKDKPNSTTSQSGTKNDKKEISQNNNSNTEVINPPNNTQKTETEPTQ) are disordered. The segment covering 352 to 376 (SQNNNSNTEVINPPNNTQKTETEPT) has biased composition (polar residues). An Autotransporter domain is found at 1015–1288 (KYEKPTNVWA…ASNLGMRYSF (274 aa)).

The protein localises to the periplasm. Its subcellular location is the secreted. The protein resides in the cell surface. It localises to the cell outer membrane. Its function is as follows. Induces vacuolation of eukaryotic cells. Causes ulceration and gastric lesions. This chain is Vacuolating cytotoxin autotransporter (vacA), found in Helicobacter pylori (strain J99 / ATCC 700824) (Campylobacter pylori J99).